Consider the following 456-residue polypeptide: MGSGHYFWAILYFASLCSASLANNAKINFREKEKKVLDQILGAGKYDARIRPSGINGTDGPAIVRINLFVRSIMTISDIKMEYSVQLTFREQWTDERLKFDDIQGRLKYLTLTEANRVWMPDLFFSNEKEGHFHNIIMPNVYIRIFPNGSVLYSIRISLTLACPMNLKLYPLDRQICSLRMASYGWTTNDLVFLWKEGDPVQVVKNLHLPRFTLEKFLTDYCNSKTNTGEYSCLKVDLLFKREFSYYLIQIYIPCCMLVIVSWVSFWLDQGAVPARVSLGVTTLLTMATQTSGINASLPPVSYTKAIDVWTGVCLTFVFGALLEFALVNYASRSGSNKANMHKESMKKKRRDLEQASLDAASDLLDTDSNATFAMKPLVRHPGDPLALEKRLQCEVHMQAPKRPNCCKTWLSKFPTRQCSRSKRIDVISRITFPLVFALFNLVYWSTYLFREEEDE.

The signal sequence occupies residues Met1–Ala22. The Extracellular portion of the chain corresponds to Asn23 to Ser245. L-glutamate contacts are provided by Arg71, Arg90, and Ser154. A disulfide bridge links Cys163 with Cys177. Ser183 is a binding site for L-glutamate. Cys222 and Cys233 are joined by a disulfide. A helical membrane pass occupies residues Tyr246 to Leu268. The Cytoplasmic portion of the chain corresponds to Asp269–Val273. A helical transmembrane segment spans residues Pro274–Asn295. Residues Ala296–Ser302 lie on the Extracellular side of the membrane. The chain crosses the membrane as a helical span at residues Tyr303–Leu323. Residues Glu324–Asp426 lie on the Cytoplasmic side of the membrane. Residues Val427–Phe450 form a helical membrane-spanning segment. At Arg451–Glu456 the chain is on the extracellular side.

Belongs to the ligand-gated ion channel (TC 1.A.9) family. Glutamate-gated chloride channel (TC 1.A.9.4) subfamily. Pentamer. Homomultimer. Expressed in the medulla layers (at protein level). Expressed in all major ON pathway medulla neurons (Mi1, Tm3, Mi4, and Mi9) and in OFF pathway neurons (Tm1, Tm2, Tm4, and Tm9).

The protein localises to the postsynaptic cell membrane. The protein resides in the cell membrane. With respect to regulation, glutamate binding triggers a rapidly reversible current, while the anti-helmintic drug ivermectin triggers a permanently open channel configuration. Inhibited by picrotoxin. Glutamate-gated chloride channel subunit. Together with Gamma-aminobutyric acid receptor Rdl, plays an important role in the visual response by regulating the activity of ON/OFF-selective neurons. The polypeptide is Glutamate-gated chloride channel (GluClalpha) (Drosophila melanogaster (Fruit fly)).